The sequence spans 89 residues: Small ribosomal subunit protein bS20 (89 aa).

Belongs to the bacterial ribosomal protein bS20 family.

Binds directly to 16S ribosomal RNA. This is Small ribosomal subunit protein bS20 from Solidesulfovibrio magneticus (strain ATCC 700980 / DSM 13731 / RS-1) (Desulfovibrio magneticus).